The following is a 103-amino-acid chain: Histone H4 (103 aa).

Positions 1–14 are enriched in gly residues; sequence MSGRGKGGKGLGKG. Residues 1–20 form a disordered region; the sequence is MSGRGKGGKGLGKGGAKRHR. Serine 2 bears the N-acetylserine mark. Lysine 17 carries the post-translational modification N6-acetyllysine. The DNA-binding element occupies 17 to 21; it reads KRHRK. Lysine 21 carries the post-translational modification N6-methyllysine.

This sequence belongs to the histone H4 family. As to quaternary structure, the nucleosome is a histone octamer containing two molecules each of H2A, H2B, H3 and H4 assembled in one H3-H4 heterotetramer and two H2A-H2B heterodimers. The octamer wraps approximately 147 bp of DNA.

Its subcellular location is the nucleus. The protein localises to the chromosome. Core component of nucleosome. Nucleosomes wrap and compact DNA into chromatin, limiting DNA accessibility to the cellular machineries which require DNA as a template. Histones thereby play a central role in transcription regulation, DNA repair, DNA replication and chromosomal stability. DNA accessibility is regulated via a complex set of post-translational modifications of histones, also called histone code, and nucleosome remodeling. The polypeptide is Histone H4 (Capsicum annuum (Capsicum pepper)).